Reading from the N-terminus, the 185-residue chain is Large ribosomal subunit protein uL15 (185 aa).

The interval 1-51 (MDLSSLRPAAGAVKNKKRVGRGQGSGNGTTAGKGNKGQQARSGYQKPINEG) is disordered. The span at 21 to 35 (RGQGSGNGTTAGKGN) shows a compositional bias: gly residues.

It belongs to the universal ribosomal protein uL15 family. In terms of assembly, part of the 50S ribosomal subunit.

In terms of biological role, binds to the 23S rRNA. The chain is Large ribosomal subunit protein uL15 from Chlorobium phaeobacteroides (strain DSM 266 / SMG 266 / 2430).